The chain runs to 276 residues: Replication protein A 32 kDa subunit-A (276 aa).

Residues 19 to 31 (GGGGYMQSPGGFG) show a composition bias toward gly residues. The interval 19-47 (GGGGYMQSPGGFGSPAPTQGEKKSRSRSQ) is disordered. The OB DNA-binding region spans 77–151 (VTIVGIVRHA…KSVVAFKIAP (75 aa)).

The protein belongs to the replication factor A protein 2 family. Component of the replication protein A complex (RPA/RP-A), a heterotrimeric complex composed of RPA1, RPA2 and RPA3. Differentially phosphorylated throughout the cell cycle, becoming phosphorylated at the G1-S transition and dephosphorylated in late mitosis. Phosphorylation increases upon replication fork stalling.

The protein resides in the nucleus. The protein localises to the PML body. Functionally, as part of the heterotrimeric replication protein A complex (RPA/RP-A), binds and stabilizes single-stranded DNA intermediates, that form during DNA replication or upon DNA stress. It prevents their reannealing and in parallel, recruits and activates different proteins and complexes involved in DNA metabolism. Thereby, it plays an essential role both in DNA replication and the cellular response to DNA damage. This chain is Replication protein A 32 kDa subunit-A (rpa2-a), found in Xenopus laevis (African clawed frog).